A 202-amino-acid chain; its full sequence is Ribosomal RNA small subunit methyltransferase G (202 aa).

S-adenosyl-L-methionine is bound by residues glycine 75, phenylalanine 80, 125 to 126 (VQ), and arginine 139.

Belongs to the methyltransferase superfamily. RNA methyltransferase RsmG family.

The protein resides in the cytoplasm. Functionally, specifically methylates the N7 position of a guanine in 16S rRNA. The polypeptide is Ribosomal RNA small subunit methyltransferase G (Mesomycoplasma hyopneumoniae (strain 7448) (Mycoplasma hyopneumoniae)).